The primary structure comprises 361 residues: uncharacterized protein (361 aa).

A signal peptide spans 1-28 (MSKSKFTKIIVVICIAAMFITGTSILSF).

This is an uncharacterized protein from Ruminiclostridium cellulolyticum (strain ATCC 35319 / DSM 5812 / JCM 6584 / H10) (Clostridium cellulolyticum).